The following is a 138-amino-acid chain: Small ribosomal subunit protein uS11c (138 aa).

The segment at M1–R24 is disordered. Over residues G9–R24 the composition is skewed to basic residues.

It belongs to the universal ribosomal protein uS11 family. In terms of assembly, part of the 30S ribosomal subunit.

It is found in the plastid. The protein resides in the chloroplast. The protein is Small ribosomal subunit protein uS11c of Panax ginseng (Korean ginseng).